The chain runs to 879 residues: Beta-mannosidase (879 aa).

An N-terminal signal peptide occupies residues 1–17 (MLLRLLLLLAPCGAGFA). Residues Asn-35 and Asn-77 are each glycosylated (N-linked (GlcNAc...) asparagine). Cysteines 167 and 176 form a disulfide. 190–192 (WDW) contributes to the substrate binding site. N-linked (GlcNAc...) asparagine glycosylation is found at Asn-297 and Asn-302. Asn-456 is a substrate binding site. The active-site Proton donor is the Glu-457. Disulfide bonds link Cys-540/Cys-629, Cys-732/Cys-761, and Cys-764/Cys-769. The active-site Nucleophile is the Glu-554. Asn-607 carries an N-linked (GlcNAc...) asparagine glycan. Asn-803 carries an N-linked (GlcNAc...) asparagine glycan.

This sequence belongs to the glycosyl hydrolase 2 family. In terms of assembly, monomer. The N-terminus is blocked. Post-translationally, N-glycosylated. As to expression, detected in kidney (at protein level). Highest expression is found in thyroid tissue. The amount of transcript is significantly higher in normal tissues than in tissues affected by the disease.

It localises to the lysosome. The catalysed reaction is Hydrolysis of terminal, non-reducing beta-D-mannose residues in beta-D-mannosides.. It functions in the pathway glycan metabolism; N-glycan degradation. Exoglycosidase that cleaves the single beta-linked mannose residue from the non-reducing end of all N-linked glycoprotein oligosaccharides. The sequence is that of Beta-mannosidase (MANBA) from Bos taurus (Bovine).